A 214-amino-acid polypeptide reads, in one-letter code: Protein OPG176 (214 aa).

This sequence belongs to the orthopoxvirus OPG176 family. In terms of assembly, tetramer. Interacts with host MYD88, TRF4, TICAM2 and MAL.

Its function is as follows. BCL2-like protein which disrupts the host immune response by inhibiting the TLR4 signaling pathway leading to NF-kappa-B activation. Acts close to the plasma membrane and targets several host TIR-domain containing adapter proteins including MYD88, TIRAP, TRIF and TICAM2. In turn, blocks the host NF-kappa-B and TRIF-mediated IRF3 activation. In Homo sapiens (Human), this protein is Protein OPG176 (OPG176).